Reading from the N-terminus, the 304-residue chain is tRNA uridine(34) hydroxylase (304 aa).

Residues 124–219 (QDEETLLIDT…YLETIPKEDS (96 aa)) form the Rhodanese domain. Residue Cys-179 is the Cysteine persulfide intermediate of the active site.

It belongs to the TrhO family.

It catalyses the reaction uridine(34) in tRNA + AH2 + O2 = 5-hydroxyuridine(34) in tRNA + A + H2O. Its function is as follows. Catalyzes oxygen-dependent 5-hydroxyuridine (ho5U) modification at position 34 in tRNAs. This chain is tRNA uridine(34) hydroxylase, found in Bartonella henselae (strain ATCC 49882 / DSM 28221 / CCUG 30454 / Houston 1) (Rochalimaea henselae).